Reading from the N-terminus, the 311-residue chain is Pyrimidine-specific ribonucleoside hydrolase RihA (311 aa).

Residue histidine 240 is part of the active site.

It belongs to the IUNH family. RihA subfamily.

Hydrolyzes cytidine or uridine to ribose and cytosine or uracil, respectively. This is Pyrimidine-specific ribonucleoside hydrolase RihA from Klebsiella pneumoniae (strain 342).